Consider the following 328-residue polypeptide: Flap endonuclease 1 (328 aa).

The N-domain stretch occupies residues 1 to 98; sequence MGVKFKDITN…ETQEERINIK (98 aa). Mg(2+) contacts are provided by aspartate 27, aspartate 80, glutamate 152, glutamate 154, aspartate 173, aspartate 175, and aspartate 227. The tract at residues 116-248 is I-domain; that stretch reads AARKYAARTT…KGIKLIHKYG (133 aa). The interval 320–328 is interaction with PCNA; that stretch reads AQSSLEDWF.

The protein belongs to the XPG/RAD2 endonuclease family. FEN1 subfamily. As to quaternary structure, interacts with PCNA. PCNA stimulates the nuclease activity without altering cleavage specificity. It depends on Mg(2+) as a cofactor.

Structure-specific nuclease with 5'-flap endonuclease and 5'-3' exonuclease activities involved in DNA replication and repair. During DNA replication, cleaves the 5'-overhanging flap structure that is generated by displacement synthesis when DNA polymerase encounters the 5'-end of a downstream Okazaki fragment. Binds the unpaired 3'-DNA end and kinks the DNA to facilitate 5' cleavage specificity. Cleaves one nucleotide into the double-stranded DNA from the junction in flap DNA, leaving a nick for ligation. Also involved in the base excision repair (BER) pathway. Acts as a genome stabilization factor that prevents flaps from equilibrating into structures that lead to duplications and deletions. Also possesses 5'-3' exonuclease activity on nicked or gapped double-stranded DNA. The protein is Flap endonuclease 1 of Methanosphaera stadtmanae (strain ATCC 43021 / DSM 3091 / JCM 11832 / MCB-3).